Reading from the N-terminus, the 343-residue chain is Glyceraldehyde-3-phosphate dehydrogenase (343 aa).

NAD(+) is bound by residues 13-14 (TI) and G111. 140–142 (SCN) lines the D-glyceraldehyde 3-phosphate pocket. C141 serves as the catalytic Nucleophile. R169 contributes to the NAD(+) binding site. 195 to 196 (HA) contributes to the D-glyceraldehyde 3-phosphate binding site. Q302 is an NAD(+) binding site.

This sequence belongs to the glyceraldehyde-3-phosphate dehydrogenase family. As to quaternary structure, homotetramer.

Its subcellular location is the cytoplasm. It catalyses the reaction D-glyceraldehyde 3-phosphate + phosphate + NADP(+) = (2R)-3-phospho-glyceroyl phosphate + NADPH + H(+). It carries out the reaction D-glyceraldehyde 3-phosphate + phosphate + NAD(+) = (2R)-3-phospho-glyceroyl phosphate + NADH + H(+). The protein operates within carbohydrate degradation; glycolysis; pyruvate from D-glyceraldehyde 3-phosphate: step 1/5. This is Glyceraldehyde-3-phosphate dehydrogenase from Hyperthermus butylicus (strain DSM 5456 / JCM 9403 / PLM1-5).